A 319-amino-acid chain; its full sequence is MNTNKIGVLLANLGTPDEPTTPAVKRYLKQFLSDPRVIDLPKFKWQFILNYMILSKRSPKVAKLYREIWTEQGSPLLAISRQQQQALQDYFNRQNQNVLVELGMSYGNPSIESATDRLIKAGVSKIIVLPLYPQYSSTTTASVLDAFARGLTQQRNIVPFEFIHSYHNDPLYIQALANTIQLAEDEKLLFSFHGIPKRYQTEGDFYPEHCQQTAQLVADKLSLTDEQWLVTYQSRFGDEEWLQPYTDETLETLPSQGVKKIAVICAGFSADCLETLEEIAEENKENFLNAGGQSYRYIPALNANTDHINALAKLIEAKI.

Residues His-193 and Glu-274 each contribute to the Fe cation site.

Belongs to the ferrochelatase family.

The protein resides in the cytoplasm. It catalyses the reaction heme b + 2 H(+) = protoporphyrin IX + Fe(2+). It functions in the pathway porphyrin-containing compound metabolism; protoheme biosynthesis; protoheme from protoporphyrin-IX: step 1/1. Functionally, catalyzes the ferrous insertion into protoporphyrin IX. The chain is Ferrochelatase from Actinobacillus pleuropneumoniae serotype 3 (strain JL03).